Consider the following 293-residue polypeptide: Carbapenem-hydrolyzing beta-lactamase KPC (293 aa).

The N-terminal stretch at 1–24 (MSLYRRLVLLSCLSWPLAGFSATA) is a signal peptide. Residue Ser-69 is the Acyl-ester intermediate of the active site. Glu-167 (proton acceptor) is an active-site residue. Substrate is bound at residue 233-235 (KTG).

The protein belongs to the class-A beta-lactamase family.

The catalysed reaction is a beta-lactam + H2O = a substituted beta-amino acid. Not inhibited by EDTA, inhibited by clavulanic acid and tazobactam. Hydrolyzes carbapenems, penicillins, cephalosporins and aztreonam with varying efficiency. In Klebsiella oxytoca, this protein is Carbapenem-hydrolyzing beta-lactamase KPC (bla).